Consider the following 678-residue polypeptide: THO complex subunit 5 homolog A (678 aa).

Disordered regions lie at residues 1-35 and 294-329; these read MASD…YSEE and ALFK…VQLD. A Nuclear localization signal motif is present at residues 7–10; sequence KKRK. Positions 14–35 are enriched in basic and acidic residues; that stretch reads NRNEDVKRGRHEDQEGRYYSEE. A compositionally biased stretch (acidic residues) spans 301-314; sequence DSQDDESDSDAEEE.

It belongs to the THOC5 family. Component of the THO subcomplex, which is composed of thoc1, thoc2, thoc3, thoc5, thoc6 and thoc7. Component of the transcription/export (TREX) complex at least composed of alyref/thoc4, ddx39b, sarnp/cip29, chtop and the THO subcomplex. Interacts with thoc7.

It localises to the nucleus. It is found in the nucleus speckle. Its subcellular location is the cytoplasm. Component of the THO subcomplex of the TREX complex which is thought to couple mRNA transcription, processing and nuclear export, and which specifically associates with spliced mRNA and not with unspliced pre-mRNA. Plays a key structural role in the oligomerization of the THO-ddx39b complex. TREX is recruited to spliced mRNAs by a transcription-independent mechanism, binds to mRNA upstream of the exon-junction complex (EJC) and is recruited in a splicing- and cap-dependent manner to a region near the 5' end of the mRNA where it functions in mRNA export to the cytoplasm via the TAP/NXF1 pathway. May be involved in cell differentiation. The sequence is that of THO complex subunit 5 homolog A (thoc5-a) from Xenopus laevis (African clawed frog).